A 475-amino-acid chain; its full sequence is Tryptophan--tRNA ligase, cytoplasmic (475 aa).

In terms of domain architecture, WHEP-TRS spans S12 to P68. The interval D61–D87 is disordered. K158 bears the N6-succinyllysine mark. Residues P168 to H177 carry the 'HIGH' region motif. Positions K353–S357 match the 'KMSKS' region motif. A Phosphoserine modification is found at S355.

It belongs to the class-I aminoacyl-tRNA synthetase family. In terms of assembly, homodimer. Interacts with oxidized form of GAPDH. Proteolytic cleavage generates 2 forms; T1-TrpRS and T2-TrpRS.

It is found in the cytoplasm. The catalysed reaction is tRNA(Trp) + L-tryptophan + ATP = L-tryptophyl-tRNA(Trp) + AMP + diphosphate + H(+). Catalyzes the attachment of tryptophan to tRNA(Trp) in a two-step reaction: tryptophan is first activated by ATP to form Trp-AMP and then transferred to the acceptor end of the tRNA(Trp). Could also possess an angiostatic activity. This Oryctolagus cuniculus (Rabbit) protein is Tryptophan--tRNA ligase, cytoplasmic (WARS1).